The following is a 657-amino-acid chain: Methionine--tRNA ligase (657 aa).

The 'HIGH' region signature appears at 13–23; sequence YYPSGNLHIGH. Residues 308-312 carry the 'KMSKS' region motif; the sequence is KMSKS. K311 contributes to the ATP binding site. The 101-residue stretch at 557–657 folds into the tRNA-binding domain; it reads DFDKVEIKAA…SAIPNGAVIK (101 aa).

This sequence belongs to the class-I aminoacyl-tRNA synthetase family. MetG type 2B subfamily. As to quaternary structure, homodimer.

The protein localises to the cytoplasm. It carries out the reaction tRNA(Met) + L-methionine + ATP = L-methionyl-tRNA(Met) + AMP + diphosphate. In terms of biological role, is required not only for elongation of protein synthesis but also for the initiation of all mRNA translation through initiator tRNA(fMet) aminoacylation. In Staphylococcus aureus (strain COL), this protein is Methionine--tRNA ligase.